The chain runs to 260 residues: uncharacterized protein (260 aa).

Residues 1 to 38 (MNWTREIEQYKQVVASYKLKMKRMEMKISDISEEKRQS) are a coiled coil.

This is an uncharacterized protein from Caenorhabditis elegans.